A 177-amino-acid chain; its full sequence is Tubulin beta chain (177 aa).

Residues 156-177 (YQDATAEEEGEFDEEEGDEEAA) are disordered. A compositionally biased stretch (acidic residues) spans 160 to 177 (TAEEEGEFDEEEGDEEAA).

This sequence belongs to the tubulin family. As to quaternary structure, dimer of alpha and beta chains. A typical microtubule is a hollow water-filled tube with an outer diameter of 25 nm and an inner diameter of 15 nM. Alpha-beta heterodimers associate head-to-tail to form protofilaments running lengthwise along the microtubule wall with the beta-tubulin subunit facing the microtubule plus end conferring a structural polarity. Microtubules usually have 13 protofilaments but different protofilament numbers can be found in some organisms and specialized cells. Mg(2+) serves as cofactor.

Its subcellular location is the cytoplasm. The protein resides in the cytoskeleton. Its function is as follows. Tubulin is the major constituent of microtubules, a cylinder consisting of laterally associated linear protofilaments composed of alpha- and beta-tubulin heterodimers. Microtubules grow by the addition of GTP-tubulin dimers to the microtubule end, where a stabilizing cap forms. Below the cap, tubulin dimers are in GDP-bound state, owing to GTPase activity of alpha-tubulin. The sequence is that of Tubulin beta chain from Lytechinus pictus (Painted sea urchin).